A 358-amino-acid chain; its full sequence is Alanine racemase (358 aa).

The Proton acceptor; specific for D-alanine role is filled by K35. Residue K35 is modified to N6-(pyridoxal phosphate)lysine. Residue R130 coordinates substrate. Residue Y255 is the Proton acceptor; specific for L-alanine of the active site. Substrate is bound at residue M303.

It belongs to the alanine racemase family. Pyridoxal 5'-phosphate serves as cofactor.

It catalyses the reaction L-alanine = D-alanine. It functions in the pathway amino-acid biosynthesis; D-alanine biosynthesis; D-alanine from L-alanine: step 1/1. In terms of biological role, catalyzes the interconversion of L-alanine and D-alanine. May also act on other amino acids. The chain is Alanine racemase (alr) from Shewanella sp. (strain MR-7).